The following is an 88-amino-acid chain: Large ribosomal subunit protein bL27 (88 aa).

A disordered region spans residues 1-24 (MAHKKGTGSTRNGRDSNAKRLGVK).

Belongs to the bacterial ribosomal protein bL27 family.

The chain is Large ribosomal subunit protein bL27 from Synechococcus sp. (strain CC9605).